The following is a 181-amino-acid chain: Probable pyruvoyl-dependent arginine decarboxylase (181 aa).

S43 carries the pyruvic acid (Ser) modification.

The protein belongs to the PdaD family. Requires pyruvate as cofactor.

It catalyses the reaction L-arginine + H(+) = agmatine + CO2. The protein is Probable pyruvoyl-dependent arginine decarboxylase of Chlorobium limicola (strain DSM 245 / NBRC 103803 / 6330).